We begin with the raw amino-acid sequence, 264 residues long: Thymidylate synthase (264 aa).

A dUMP-binding site is contributed by Arg21. Residue His51 participates in (6R)-5,10-methylene-5,6,7,8-tetrahydrofolate binding. Residue 126 to 127 (RR) coordinates dUMP. Cys146 acts as the Nucleophile in catalysis. DUMP is bound by residues 166-169 (RSAD), Asn177, and 207-209 (HLY). Residue Asp169 participates in (6R)-5,10-methylene-5,6,7,8-tetrahydrofolate binding. Ser263 contacts (6R)-5,10-methylene-5,6,7,8-tetrahydrofolate.

The protein belongs to the thymidylate synthase family. Bacterial-type ThyA subfamily. As to quaternary structure, homodimer.

It localises to the cytoplasm. It carries out the reaction dUMP + (6R)-5,10-methylene-5,6,7,8-tetrahydrofolate = 7,8-dihydrofolate + dTMP. Its pathway is pyrimidine metabolism; dTTP biosynthesis. Its function is as follows. Catalyzes the reductive methylation of 2'-deoxyuridine-5'-monophosphate (dUMP) to 2'-deoxythymidine-5'-monophosphate (dTMP) while utilizing 5,10-methylenetetrahydrofolate (mTHF) as the methyl donor and reductant in the reaction, yielding dihydrofolate (DHF) as a by-product. This enzymatic reaction provides an intracellular de novo source of dTMP, an essential precursor for DNA biosynthesis. This chain is Thymidylate synthase, found in Neisseria gonorrhoeae (strain ATCC 700825 / FA 1090).